The primary structure comprises 1879 residues: Protein TIC 214 (1879 aa).

The next 6 helical transmembrane spans lie at Ile18–Gly38, Phe64–Leu84, Pro87–Pro107, Leu124–Leu144, Val172–Ile192, and Ile218–Pro238. Disordered stretches follow at residues Glu245–Thr305 and Ile586–Met702. Acidic residues-rich tracts occupy residues Ala253–Thr268 and Glu295–Thr305. Over residues Ile586–Thr688 the composition is skewed to low complexity. Basic and acidic residues predominate over residues Ile691–Pro701.

Belongs to the TIC214 family. Part of the Tic complex.

Its subcellular location is the plastid. It localises to the chloroplast inner membrane. Its function is as follows. Involved in protein precursor import into chloroplasts. May be part of an intermediate translocation complex acting as a protein-conducting channel at the inner envelope. The sequence is that of Protein TIC 214 from Cucumis sativus (Cucumber).